Here is a 387-residue protein sequence, read N- to C-terminus: 8-amino-7-oxononanoate synthase (387 aa).

Residue Arg19 coordinates substrate. A pyridoxal 5'-phosphate-binding site is contributed by 106-107 (GY). Substrate is bound at residue His131. 3 residues coordinate pyridoxal 5'-phosphate: Ser177, His205, and Thr236. Lys239 is modified (N6-(pyridoxal phosphate)lysine). Thr353 serves as a coordination point for substrate.

The protein belongs to the class-II pyridoxal-phosphate-dependent aminotransferase family. BioF subfamily. Homodimer. Pyridoxal 5'-phosphate serves as cofactor.

It carries out the reaction 6-carboxyhexanoyl-[ACP] + L-alanine + H(+) = (8S)-8-amino-7-oxononanoate + holo-[ACP] + CO2. It functions in the pathway cofactor biosynthesis; biotin biosynthesis. Its function is as follows. Catalyzes the decarboxylative condensation of pimeloyl-[acyl-carrier protein] and L-alanine to produce 8-amino-7-oxononanoate (AON), [acyl-carrier protein], and carbon dioxide. This Nitrosomonas europaea (strain ATCC 19718 / CIP 103999 / KCTC 2705 / NBRC 14298) protein is 8-amino-7-oxononanoate synthase.